The sequence spans 274 residues: MKKTAIALLAWFVSSASLAATPWQKITHPVPGAAQSIGSFANGCIIGADTLPVQSDNYQVMRTDQRRYFGHPDLVMFIQRLSHQAQQRGLGTVLIGDMGMPAGGRFNGGHASHQTGLDVDIFLQLPKTRWSQAQLLRPQALDLVSRDGKHVVPSRWSSDIASLIKLAAQDNDVTRIFVNPAIKQQLCLDAGSDRDWLRKVRPWFQHRAHMRVRLRCPADSLECEDQPLPPPGDGCGAELQSWFEPPKPGTTKPEKKTPPPLPPSCQALLDEHVL.

The N-terminal stretch at M1–A19 is a signal peptide. 3 cysteine pairs are disulfide-bonded: C44/C265, C187/C235, and C216/C223. Zn(2+) is bound by residues H110, H113, D120, D147, and H150. Residues D225–L274 are disordered.

The protein belongs to the peptidase M74 family. As to quaternary structure, dimer. It depends on Zn(2+) as a cofactor.

The protein localises to the periplasm. Functionally, murein endopeptidase that cleaves the D-alanyl-meso-2,6-diamino-pimelyl amide bond that connects peptidoglycan strands. Likely plays a role in the removal of murein from the sacculus. The chain is Penicillin-insensitive murein endopeptidase from Salmonella paratyphi A (strain ATCC 9150 / SARB42).